The following is a 163-amino-acid chain: Probable chemoreceptor glutamine deamidase CheD (163 aa).

Belongs to the CheD family.

It catalyses the reaction L-glutaminyl-[protein] + H2O = L-glutamyl-[protein] + NH4(+). Probably deamidates glutamine residues to glutamate on methyl-accepting chemotaxis receptors (MCPs), playing an important role in chemotaxis. The polypeptide is Probable chemoreceptor glutamine deamidase CheD (Pyrococcus abyssi (strain GE5 / Orsay)).